Reading from the N-terminus, the 245-residue chain is 4-hydroxy-tetrahydrodipicolinate reductase (245 aa).

Residues G7 to V12, G75 to T77, and A102 to F105 each bind NAD(+). H132 functions as the Proton donor/acceptor in the catalytic mechanism. H133 contacts (S)-2,3,4,5-tetrahydrodipicolinate. K136 acts as the Proton donor in catalysis. G142 to T143 lines the (S)-2,3,4,5-tetrahydrodipicolinate pocket.

Belongs to the DapB family.

It localises to the cytoplasm. The enzyme catalyses (S)-2,3,4,5-tetrahydrodipicolinate + NAD(+) + H2O = (2S,4S)-4-hydroxy-2,3,4,5-tetrahydrodipicolinate + NADH + H(+). It catalyses the reaction (S)-2,3,4,5-tetrahydrodipicolinate + NADP(+) + H2O = (2S,4S)-4-hydroxy-2,3,4,5-tetrahydrodipicolinate + NADPH + H(+). It participates in amino-acid biosynthesis; L-lysine biosynthesis via DAP pathway; (S)-tetrahydrodipicolinate from L-aspartate: step 4/4. Its function is as follows. Catalyzes the conversion of 4-hydroxy-tetrahydrodipicolinate (HTPA) to tetrahydrodipicolinate. This chain is 4-hydroxy-tetrahydrodipicolinate reductase, found in Mycobacterium sp. (strain KMS).